We begin with the raw amino-acid sequence, 177 residues long: dCTP deaminase (177 aa).

Residues 100–105 (RSSIAR) and Asp116 contribute to the dCTP site. Glu126 serves as the catalytic Proton donor/acceptor. DCTP-binding residues include Tyr159 and Gln166.

This sequence belongs to the dCTP deaminase family. In terms of assembly, homotrimer.

It carries out the reaction dCTP + H2O + H(+) = dUTP + NH4(+). It participates in pyrimidine metabolism; dUMP biosynthesis; dUMP from dCTP (dUTP route): step 1/2. Catalyzes the deamination of dCTP to dUTP. The sequence is that of dCTP deaminase from Korarchaeum cryptofilum (strain OPF8).